The following is a 170-amino-acid chain: Lipoprotein signal peptidase (170 aa).

3 helical membrane passes run 12-32 (WYWV…WVLS), 67-87 (WQRW…SVWL), and 94-113 (MWRL…GNLI). Catalysis depends on residues Asp-123 and Asp-141. The chain crosses the membrane as a helical span at residues 139–159 (IADSAICVGAGLIILDSFVAG).

It belongs to the peptidase A8 family.

It localises to the cell inner membrane. It carries out the reaction Release of signal peptides from bacterial membrane prolipoproteins. Hydrolyzes -Xaa-Yaa-Zaa-|-(S,diacylglyceryl)Cys-, in which Xaa is hydrophobic (preferably Leu), and Yaa (Ala or Ser) and Zaa (Gly or Ala) have small, neutral side chains.. It functions in the pathway protein modification; lipoprotein biosynthesis (signal peptide cleavage). In terms of biological role, this protein specifically catalyzes the removal of signal peptides from prolipoproteins. This chain is Lipoprotein signal peptidase, found in Shewanella pealeana (strain ATCC 700345 / ANG-SQ1).